The following is a 254-amino-acid chain: Transcription factor CAULIFLOWER (254 aa).

One can recognise an MADS-box domain in the interval 1-61 (MGRGRVEMKR…GKLFEYSSES (61 aa)). Residues 90–180 (QTNWSMEYSR…TKQIKERESI (91 aa)) form the K-box domain. The segment covering 182 to 191 (RTHQNQSEQQ) has biased composition (polar residues). A disordered region spans residues 182–205 (RTHQNQSEQQNRSHHVAPQPQPQL).

Homodimer capable of binding to CArG-box sequences.

The protein localises to the nucleus. Functionally, probable transcription factor that promotes early floral meristem identity in synergy with APETALA1, FRUITFULL and LEAFY. Is required subsequently for the transition of an inflorescence meristem into a floral meristem. Seems to be partially redundant to the function of APETALA1. This is Transcription factor CAULIFLOWER (CAL) from Brassica rapa subsp. chinensis (Pak-choi).